Reading from the N-terminus, the 663-residue chain is 4-hydroxy-3-methylbut-2-en-1-yl diphosphate synthase (flavodoxin) (663 aa).

[4Fe-4S] cluster-binding residues include Cys-568, Cys-571, Cys-602, and Glu-609.

This sequence belongs to the IspG family. [4Fe-4S] cluster serves as cofactor.

It catalyses the reaction (2E)-4-hydroxy-3-methylbut-2-enyl diphosphate + oxidized [flavodoxin] + H2O + 2 H(+) = 2-C-methyl-D-erythritol 2,4-cyclic diphosphate + reduced [flavodoxin]. The protein operates within isoprenoid biosynthesis; isopentenyl diphosphate biosynthesis via DXP pathway; isopentenyl diphosphate from 1-deoxy-D-xylulose 5-phosphate: step 5/6. Converts 2C-methyl-D-erythritol 2,4-cyclodiphosphate (ME-2,4cPP) into 1-hydroxy-2-methyl-2-(E)-butenyl 4-diphosphate. The sequence is that of 4-hydroxy-3-methylbut-2-en-1-yl diphosphate synthase (flavodoxin) from Leptospira borgpetersenii serovar Hardjo-bovis (strain JB197).